Consider the following 473-residue polypeptide: GTPase Der (473 aa).

EngA-type G domains are found at residues 3–167 and 203–378; these read FTVA…GKDR and LRVA…RVWN. Residues 9–16, 56–60, 119–122, 209–216, 256–260, and 321–324 contribute to the GTP site; these read GRPNVGKS, DTAGL, NKSE, GRPNAGKS, DTAGM, and NKWD. A KH-like domain is found at 379 to 463; it reads KRISTARLNR…PIRIHFRSAE (85 aa).

Belongs to the TRAFAC class TrmE-Era-EngA-EngB-Septin-like GTPase superfamily. EngA (Der) GTPase family. Associates with the 50S ribosomal subunit.

Functionally, GTPase that plays an essential role in the late steps of ribosome biogenesis. This is GTPase Der from Rhizobium etli (strain CIAT 652).